The chain runs to 441 residues: Glutamate--tRNA ligase 1 (441 aa).

The short motif at 9–19 is the 'HIGH' region element; it reads PSPTGFIHVGN. The 'KMSKS' region signature appears at 239–243; that stretch reads ALSKR. Lysine 242 contacts ATP.

This sequence belongs to the class-I aminoacyl-tRNA synthetase family. Glutamate--tRNA ligase type 1 subfamily. As to quaternary structure, monomer.

The protein localises to the cytoplasm. The catalysed reaction is tRNA(Glu) + L-glutamate + ATP = L-glutamyl-tRNA(Glu) + AMP + diphosphate. Its function is as follows. Catalyzes the attachment of glutamate to tRNA(Glu) in a two-step reaction: glutamate is first activated by ATP to form Glu-AMP and then transferred to the acceptor end of tRNA(Glu). The chain is Glutamate--tRNA ligase 1 from Cereibacter sphaeroides (strain ATCC 17025 / ATH 2.4.3) (Rhodobacter sphaeroides).